The following is an 861-amino-acid chain: E3 ubiquitin-protein ligase HECTD3 (861 aa).

The residue at position 2 (A2) is an N-acetylalanine. S12 bears the Phosphoserine mark. The 179-residue stretch at 219–397 folds into the DOC domain; it reads DEDLIHFLYD…ASLVRYPRLE (179 aa). Residues 512 to 857 enclose the HECT domain; the sequence is YEKPLDYRWP…NCVAIDTDMS (346 aa). Residue C823 is the Glycyl thioester intermediate of the active site.

In terms of assembly, interacts with TRIOBP. Interacts with STX8.

Its subcellular location is the cytoplasm. It localises to the perinuclear region. The enzyme catalyses S-ubiquitinyl-[E2 ubiquitin-conjugating enzyme]-L-cysteine + [acceptor protein]-L-lysine = [E2 ubiquitin-conjugating enzyme]-L-cysteine + N(6)-ubiquitinyl-[acceptor protein]-L-lysine.. It functions in the pathway protein modification; protein ubiquitination. Its function is as follows. E3 ubiquitin ligases accepts ubiquitin from an E2 ubiquitin-conjugating enzyme in the form of a thioester and then directly transfers the ubiquitin to targeted substrates. Mediates ubiquitination of TRIOBP and its subsequent proteasomal degradation, thus facilitating cell cycle progression by regulating the turn-over of TRIOBP. Also mediates ubiquitination of STX8. The protein is E3 ubiquitin-protein ligase HECTD3 (Hectd3) of Mus musculus (Mouse).